A 542-amino-acid chain; its full sequence is CTP synthase (542 aa).

An amidoligase domain region spans residues 1-265 (MARYVFITGG…DSEVLSAFGI (265 aa)). Position 13 (serine 13) interacts with CTP. Serine 13 is a binding site for UTP. Residue 14–19 (SLGKGI) coordinates ATP. Position 54 (tyrosine 54) interacts with L-glutamine. Aspartate 71 provides a ligand contact to ATP. Positions 71 and 139 each coordinate Mg(2+). CTP contacts are provided by residues 146–148 (DIE), 186–191 (KTKPTQ), and lysine 222. UTP is bound by residues 186–191 (KTKPTQ) and lysine 222. Residues 291 to 541 (TIAVVGKYTG…IEAAIEQSRL (251 aa)) form the Glutamine amidotransferase type-1 domain. Glycine 353 serves as a coordination point for L-glutamine. The active-site Nucleophile; for glutamine hydrolysis is the cysteine 380. Residues 381-384 (FGMQ), glutamate 404, and arginine 469 contribute to the L-glutamine site. Active-site residues include histidine 514 and glutamate 516.

The protein belongs to the CTP synthase family. In terms of assembly, homotetramer.

It carries out the reaction UTP + L-glutamine + ATP + H2O = CTP + L-glutamate + ADP + phosphate + 2 H(+). It catalyses the reaction L-glutamine + H2O = L-glutamate + NH4(+). The catalysed reaction is UTP + NH4(+) + ATP = CTP + ADP + phosphate + 2 H(+). It functions in the pathway pyrimidine metabolism; CTP biosynthesis via de novo pathway; CTP from UDP: step 2/2. Its activity is regulated as follows. Allosterically activated by GTP, when glutamine is the substrate; GTP has no effect on the reaction when ammonia is the substrate. The allosteric effector GTP functions by stabilizing the protein conformation that binds the tetrahedral intermediate(s) formed during glutamine hydrolysis. Inhibited by the product CTP, via allosteric rather than competitive inhibition. Catalyzes the ATP-dependent amination of UTP to CTP with either L-glutamine or ammonia as the source of nitrogen. Regulates intracellular CTP levels through interactions with the four ribonucleotide triphosphates. The sequence is that of CTP synthase from Brucella melitensis biotype 2 (strain ATCC 23457).